The chain runs to 342 residues: Ribosomal RNA small subunit methyltransferase C (342 aa).

The protein belongs to the methyltransferase superfamily. RsmC family. In terms of assembly, monomer.

Its subcellular location is the cytoplasm. It carries out the reaction guanosine(1207) in 16S rRNA + S-adenosyl-L-methionine = N(2)-methylguanosine(1207) in 16S rRNA + S-adenosyl-L-homocysteine + H(+). Functionally, specifically methylates the guanine in position 1207 of 16S rRNA in the 30S particle. In Citrobacter koseri (strain ATCC BAA-895 / CDC 4225-83 / SGSC4696), this protein is Ribosomal RNA small subunit methyltransferase C.